We begin with the raw amino-acid sequence, 167 residues long: SAR-endolysin (167 aa).

A helical; Signal-anchor for type II membrane protein transmembrane segment spans residues 11–31 (VIAAISGGAIAIASVLITGPG). Catalysis depends on proton donor/acceptor residues E37 and D46.

It belongs to the glycosyl hydrolase 24 family.

It is found in the host cell inner membrane. It carries out the reaction Hydrolysis of (1-&gt;4)-beta-linkages between N-acetylmuramic acid and N-acetyl-D-glucosamine residues in a peptidoglycan and between N-acetyl-D-glucosamine residues in chitodextrins.. Signal-arrest-release (SAR) endolysin with lysozyme activity that degrades host peptidoglycans and participates with the pinholin and spanin proteins in the sequential events which lead to programmed host cell lysis releasing the mature viral particles. Once the pinholin has permeabilized the host cell membrane, the SAR-endolysin is released into the periplasm where it breaks down the peptidoglycan layer. This is SAR-endolysin (19) from Bacteriophage PS34.